Reading from the N-terminus, the 402-residue chain is Argininosuccinate synthase (402 aa).

ATP is bound by residues 13-21 (AYSGGLDTS) and A40. Y91 and S96 together coordinate L-citrulline. G121 lines the ATP pocket. The L-aspartate site is built by T123, N127, and D128. Residue N127 coordinates L-citrulline. The L-citrulline site is built by R131, S180, S189, E265, and Y277.

Belongs to the argininosuccinate synthase family. Type 1 subfamily. As to quaternary structure, homotetramer.

It is found in the cytoplasm. It carries out the reaction L-citrulline + L-aspartate + ATP = 2-(N(omega)-L-arginino)succinate + AMP + diphosphate + H(+). It participates in amino-acid biosynthesis; L-arginine biosynthesis; L-arginine from L-ornithine and carbamoyl phosphate: step 2/3. This chain is Argininosuccinate synthase, found in Leptospira biflexa serovar Patoc (strain Patoc 1 / Ames).